Reading from the N-terminus, the 127-residue chain is Small ribosomal subunit protein uS12m (127 aa).

This sequence belongs to the universal ribosomal protein uS12 family.

It is found in the mitochondrion. In Acanthamoeba castellanii (Amoeba), this protein is Small ribosomal subunit protein uS12m (RPS12).